Here is a 514-residue protein sequence, read N- to C-terminus: Serine--tRNA ligase, cytoplasmic (514 aa).

Position 1 is an N-acetylmethionine (methionine 1). The segment at 9–61 (RVDKGGDPALIRETQEKRFKDPGLVDQLVKADSEWRRCRFRADNLNKLKNLCS) is interaction with tRNA. A Phosphoserine modification is found at serine 241. L-serine-binding residues include threonine 271 and arginine 302. ATP is bound by residues 302-304 (RQE) and 318-321 (VHQF). Position 323 is an N6-acetyllysine (lysine 323). Glutamate 325 provides a ligand contact to L-serine. 391 to 394 (ELVS) is an ATP binding site. L-serine is bound at residue asparagine 427. The tract at residues 472–514 (KPAPIDQEPSKKQKKQHEGSKKKAAARDVTLENRLQNMEVTDA) is disordered. Over residues 479-502 (EPSKKQKKQHEGSKKKAAARDVTL) the composition is skewed to basic and acidic residues. A Nuclear localization signal motif is present at residues 482–494 (KKQKKQHEGSKKK). The span at 504–514 (NRLQNMEVTDA) shows a compositional bias: polar residues.

The protein belongs to the class-II aminoacyl-tRNA synthetase family. Type-1 seryl-tRNA synthetase subfamily. Homodimer. The tRNA molecule may bind across the dimer. Interacts with SIRT2. Interacts with METTL6; interaction is required for the tRNA N(3)-methylcytidine methyltransferase activity of METTL6.

Its subcellular location is the cytoplasm. The protein resides in the nucleus. The catalysed reaction is tRNA(Ser) + L-serine + ATP = L-seryl-tRNA(Ser) + AMP + diphosphate + H(+). It catalyses the reaction tRNA(Sec) + L-serine + ATP = L-seryl-tRNA(Sec) + AMP + diphosphate + H(+). It participates in aminoacyl-tRNA biosynthesis; selenocysteinyl-tRNA(Sec) biosynthesis; L-seryl-tRNA(Sec) from L-serine and tRNA(Sec): step 1/1. Its function is as follows. Catalyzes the attachment of serine to tRNA(Ser) in a two-step reaction: serine is first activated by ATP to form Ser-AMP and then transferred to the acceptor end of tRNA(Ser). Is probably also able to aminoacylate tRNA(Sec) with serine, to form the misacylated tRNA L-seryl-tRNA(Sec), which will be further converted into selenocysteinyl-tRNA(Sec). In the nucleus, binds to the VEGFA core promoter and prevents MYC binding and transcriptional activation by MYC. Recruits SIRT2 to the VEGFA promoter, promoting deacetylation of histone H4 at 'Lys-16' (H4K16). Thereby, inhibits the production of VEGFA and sprouting angiogenesis mediated by VEGFA. The polypeptide is Serine--tRNA ligase, cytoplasmic (SARS1) (Oryctolagus cuniculus (Rabbit)).